Reading from the N-terminus, the 237-residue chain is MDYFEIMDTVCKDLGLNFNQEKYNKFIKYKDILKLWNDKMNLTAIVDDKDIIKKHFIDSIRVFKFLPLKDAKSIIDVGTGAGFPGIPIKIIKPEVKLILLDSLNKRIKFLNQVVLSIKLNDVTCIHGRAEDCARKIEYRENNDVVVSRAVANLTVLSEFCIPYIKVGGYFIAMKGPSVEDEITESKNAINILGGKIEDIIKVEDDEFNHNLVVIKKITHTSDKYPRKAGIVSKNPLR.

S-adenosyl-L-methionine is bound by residues Gly-78, Phe-83, 129–130 (AE), and Arg-148.

It belongs to the methyltransferase superfamily. RNA methyltransferase RsmG family.

It is found in the cytoplasm. Functionally, specifically methylates the N7 position of a guanine in 16S rRNA. The chain is Ribosomal RNA small subunit methyltransferase G from Clostridium kluyveri (strain ATCC 8527 / DSM 555 / NBRC 12016 / NCIMB 10680 / K1).